Reading from the N-terminus, the 680-residue chain is DNA ligase (680 aa).

An NAD(+)-binding site is contributed by 32–36 (DTVYD). Positions 47–66 (QNDPGLQRPDSPTQRVGGAP) are disordered. NAD(+)-binding positions include 81 to 82 (SL) and glutamate 115. Lysine 117 (N6-AMP-lysine intermediate) is an active-site residue. NAD(+) contacts are provided by arginine 138, glutamate 175, lysine 291, and lysine 315. Zn(2+) is bound by residues cysteine 409, cysteine 412, cysteine 427, and cysteine 432. The region spanning 602–680 (DADGVLQGKT…EADLTALLQP (79 aa)) is the BRCT domain.

The protein belongs to the NAD-dependent DNA ligase family. LigA subfamily. Requires Mg(2+) as cofactor. It depends on Mn(2+) as a cofactor.

It carries out the reaction NAD(+) + (deoxyribonucleotide)n-3'-hydroxyl + 5'-phospho-(deoxyribonucleotide)m = (deoxyribonucleotide)n+m + AMP + beta-nicotinamide D-nucleotide.. Its function is as follows. DNA ligase that catalyzes the formation of phosphodiester linkages between 5'-phosphoryl and 3'-hydroxyl groups in double-stranded DNA using NAD as a coenzyme and as the energy source for the reaction. It is essential for DNA replication and repair of damaged DNA. This is DNA ligase from Synechococcus sp. (strain CC9605).